A 194-amino-acid polypeptide reads, in one-letter code: Peptidyl-tRNA hydrolase (194 aa).

Tyr-17 is a binding site for tRNA. Residue His-22 is the Proton acceptor of the active site. The tRNA site is built by Tyr-69, Asn-71, and Asn-117.

Belongs to the PTH family. In terms of assembly, monomer.

The protein localises to the cytoplasm. The catalysed reaction is an N-acyl-L-alpha-aminoacyl-tRNA + H2O = an N-acyl-L-amino acid + a tRNA + H(+). Its function is as follows. Hydrolyzes ribosome-free peptidyl-tRNAs (with 1 or more amino acids incorporated), which drop off the ribosome during protein synthesis, or as a result of ribosome stalling. In terms of biological role, catalyzes the release of premature peptidyl moieties from peptidyl-tRNA molecules trapped in stalled 50S ribosomal subunits, and thus maintains levels of free tRNAs and 50S ribosomes. The protein is Peptidyl-tRNA hydrolase of Paenarthrobacter aurescens (strain TC1).